A 395-amino-acid polypeptide reads, in one-letter code: Elongation factor Tu (395 aa).

The 196-residue stretch at 10–205 folds into the tr-type G domain; that stretch reads KPHCNIGTIG…AVDSYIPQPE (196 aa). The G1 stretch occupies residues 19–26; it reads GHVDHGKT. 19–26 contacts GTP; sequence GHVDHGKT. Residue T26 coordinates Mg(2+). Residues 60 to 64 form a G2 region; sequence GITIA. The G3 stretch occupies residues 81–84; that stretch reads DCPG. Residues 81–85 and 136–139 each bind GTP; these read DCPGH and NKMD. Positions 136–139 are G4; it reads NKMD. Positions 173–175 are G5; it reads SAL.

The protein belongs to the TRAFAC class translation factor GTPase superfamily. Classic translation factor GTPase family. EF-Tu/EF-1A subfamily. In terms of assembly, monomer.

Its subcellular location is the cytoplasm. The enzyme catalyses GTP + H2O = GDP + phosphate + H(+). In terms of biological role, GTP hydrolase that promotes the GTP-dependent binding of aminoacyl-tRNA to the A-site of ribosomes during protein biosynthesis. This is Elongation factor Tu from Acidiphilium cryptum (strain JF-5).